Reading from the N-terminus, the 206-residue chain is Reticulon-like protein B13 (206 aa).

A Reticulon domain is found at 16–206 (VEDIYLWRRK…GTEEKVKKSE (191 aa)). A run of 3 helical transmembrane segments spans residues 27 to 47 (LAFSTLLVSTSTWILLSFYGF), 50 to 70 (ITIVSWIGIAVVSMIFLWGSL), and 134 to 154 (IGNLLDFHTCLFIGLVMGLTV).

Its subcellular location is the endoplasmic reticulum membrane. This chain is Reticulon-like protein B13 (RTNLB13), found in Arabidopsis thaliana (Mouse-ear cress).